The chain runs to 62 residues: Defensin BmKDfsin5 (62 aa).

The N-terminal stretch at 1–24 (MKVIALFFLFAFIFCTLEVAIVEA) is a signal peptide. Cystine bridges form between Cys-28-Cys-49, Cys-35-Cys-57, and Cys-39-Cys-59.

It belongs to the invertebrate defensin family. Type 2 subfamily. As to expression, highly expressed in non-venom gland (hemolymph) and moderately expressed in venom gland.

It is found in the secreted. In terms of biological role, antibacterial peptide active against Gram-positive bacteria (including S.aureus ATCC25923 (MIC=2.5 uM), M.luteus AB93113 (MIC=2.5 uM), and the antibiotic-resistant S.epidermidis PRSE P1389 (MIC=1.25 uM)), but not against Gram-negative bacteria (including E.coli and P.aeruginosa). Also has weak blocking activity on Kv1.1/KCNA1 (8.7% inhibition), Kv1.2/KCNA2 (10.2% inhibition), Kv1.3/KCNA3 (9.0% inhibition), KCa3.1/KCNN4/IK (9.1% inhibition), KCa2.3/KCNN3/SK3 (46.3% inhibition) and Kv11.1/KCNH2/ERG1 (16.9% inhibition) channels (tested at 1 uM). It inhibits potassium channel current by interacting with the pore region. The chain is Defensin BmKDfsin5 from Olivierus martensii (Manchurian scorpion).